The primary structure comprises 822 residues: Coiled-coil domain-containing protein 175 (822 aa).

Coiled coils occupy residues 129 to 164 (IIEISQIKRKIETMNNEVKFLTNKISELKSMNEVLG), 223 to 397 (IEKQ…KQMM), and 510 to 537 (HLIETLKEQLAQDKKDYVKKEERLIEEL).

The polypeptide is Coiled-coil domain-containing protein 175 (Ccdc175) (Mus musculus (Mouse)).